Here is a 294-residue protein sequence, read N- to C-terminus: uncharacterized protein (294 aa).

The next 3 membrane-spanning stretches (helical) occupy residues 21–41 (AIVATNFSWLFITFFVMTFTF), 51–71 (PIIWTLYFFLCLIAFLLLWAA), and 77–97 (ILFSFAFGDVYSFFMAGVFLF). Positions 156–176 (HPVPFPAEPGSPDPVSPPPPI) are disordered. A coiled-coil region spans residues 184 to 215 (ERAESLHAGNIELAEDLQRIQEMERNLENERS). A compositionally biased stretch (basic and acidic residues) spans 265–277 (QQENESRLEERRF). A disordered region spans residues 265–294 (QQENESRLEERRFQSHSTNSLFEADSSRDN).

It is found in the mitochondrion membrane. This is an uncharacterized protein from Arabidopsis thaliana (Mouse-ear cress).